We begin with the raw amino-acid sequence, 189 residues long: Interleukin-23 subunit alpha (189 aa).

The N-terminal stretch at 1–19 (MLGSRAVMLLLLLPWTAQG) is a signal peptide. Cysteine 77 and cysteine 89 are joined by a disulfide.

The protein belongs to the IL-6 superfamily. As to quaternary structure, heterodimer with IL12B; disulfide-linked. The heterodimer is known as interleukin IL-23. Interacts with IL23R; this interaction enables recruitment of IL12RB1. Secreted by activated dendritic and phagocytic cells and keratinocytes. Also expressed by dermal Langerhans cells (at protein level).

It localises to the secreted. In terms of biological role, associates with IL12B to form the pro-inflammatory cytokine IL-23 that plays different roles in innate and adaptive immunity. Released by antigen-presenting cells such as dendritic cells or macrophages, binds to a heterodimeric receptor complex composed of IL12RB1 and IL23R to activate JAK2 and TYK2 which then phosphorylate the receptor to form a docking site leading to the phosphorylation of STAT3 and STAT4. This process leads to activation of several pathways including p38 MAPK or NF-kappa-B and promotes the production of pro-inflammatory cytokines such as interleukin-17A/IL17A. In turn, participates in the early and effective intracellular bacterial clearance. Promotes the expansion and survival of T-helper 17 cells, a CD4-positive helper T-cell subset that produces IL-17, as well as other IL-17-producing cells. The protein is Interleukin-23 subunit alpha (IL23A) of Homo sapiens (Human).